The sequence spans 648 residues: Probable potassium transport system protein Kup 1 (648 aa).

A run of 12 helical transmembrane segments spans residues 25-45 (LTLG…IYAF), 57-77 (IVAG…ILVV), 113-133 (LVMA…VITP), 153-173 (SVSR…LFLM), 184-204 (LFGP…LIHI), 219-239 (GVLF…AVFL), 263-283 (WLAI…AFAL), 312-332 (IPLV…VITG), 362-382 (IYLP…VLGF), 391-411 (AYGV…FLVV), 417-437 (WGWP…LFFF), and 446-466 (EGGW…VTWV).

It belongs to the HAK/KUP transporter (TC 2.A.72) family.

The protein localises to the cell inner membrane. The enzyme catalyses K(+)(in) + H(+)(in) = K(+)(out) + H(+)(out). Its function is as follows. Transport of potassium into the cell. Likely operates as a K(+):H(+) symporter. This is Probable potassium transport system protein Kup 1 from Rhizorhabdus wittichii (strain DSM 6014 / CCUG 31198 / JCM 15750 / NBRC 105917 / EY 4224 / RW1) (Sphingomonas wittichii).